We begin with the raw amino-acid sequence, 173 residues long: Large ribosomal subunit protein uL10 (173 aa).

This sequence belongs to the universal ribosomal protein uL10 family. Part of the ribosomal stalk of the 50S ribosomal subunit. The N-terminus interacts with L11 and the large rRNA to form the base of the stalk. The C-terminus forms an elongated spine to which L12 dimers bind in a sequential fashion forming a multimeric L10(L12)X complex.

In terms of biological role, forms part of the ribosomal stalk, playing a central role in the interaction of the ribosome with GTP-bound translation factors. This Maridesulfovibrio salexigens (strain ATCC 14822 / DSM 2638 / NCIMB 8403 / VKM B-1763) (Desulfovibrio salexigens) protein is Large ribosomal subunit protein uL10.